A 394-amino-acid polypeptide reads, in one-letter code: Small RNA 2'-O-methyltransferase (394 aa).

Aspartate 78 and serine 114 together coordinate S-adenosyl-L-methionine. The Mg(2+) site is built by glutamate 132, glutamate 135, histidine 136, and histidine 181.

Belongs to the methyltransferase superfamily. HEN1 family. Mg(2+) is required as a cofactor.

It localises to the cytoplasm. It carries out the reaction small RNA 3'-end nucleotide + S-adenosyl-L-methionine = small RNA 3'-end 2'-O-methylnucleotide + S-adenosyl-L-homocysteine + H(+). Functionally, methyltransferase that adds a 2'-O-methyl group at the 3'-end of piRNAs, a class of 24 to 30 nucleotide RNAs that are generated by a Dicer-independent mechanism and are primarily derived from transposons and other repeated sequence elements. This probably protects the 3'-end of piRNAs from uridylation activity and subsequent degradation. Stabilization of piRNAs is essential for gametogenesis. This chain is Small RNA 2'-O-methyltransferase (Henmt1), found in Rattus norvegicus (Rat).